Here is a 498-residue protein sequence, read N- to C-terminus: Transcription factor kayak (498 aa).

A compositionally biased stretch (polar residues) spans 108–127 (ASLGQGSESEDSNASYNDTQ). Disordered stretches follow at residues 108 to 144 (ASLG…HTDS) and 177 to 234 (GSAS…KRRV). 2 stretches are compositionally biased toward low complexity: residues 135–144 (TDTSSAHTDS) and 177–191 (GSAS…TSNT). The bZIP domain maps to 212-275 (EQKRAVRRER…KQLEYLLATH (64 aa)). A basic motif region spans residues 214-233 (KRAVRRERNKQAAARCRKRR). The tract at residues 240-247 (LTEEVEQL) is leucine-zipper. A compositionally biased stretch (low complexity) spans 304 to 325 (AGSSGSGASSHHNHNSNDSSNG). Disordered stretches follow at residues 304–345 (AGSS…SPLD) and 465–498 (TPVS…LVSL). Positions 333-343 (TLNSTGRSNSP) are enriched in polar residues. S342 is subject to Phosphoserine.

Belongs to the bZIP family. Fos subfamily. Homodimer. Heterodimer with Jra. The kay-Jra heterodimer binds more stably to the AP-1 site than either of the two proteins alone.

The protein resides in the nucleus. In terms of biological role, developmentally regulated transcription factor AP-1 binds and recognizes the enhancer DNA sequence: 5'-TGA[CG]TCA-3'. May play a role in the function or determination of a particular subset of cells in the developing embryo. It is able to carry out its function either independently of or in conjunction with Jra. This Drosophila simulans (Fruit fly) protein is Transcription factor kayak.